Consider the following 465-residue polypeptide: Gamma-aminobutyric acid receptor subunit alpha-6 (465 aa).

Residues 1-19 (MALLIAWVCVAVSIEKALG) form the signal peptide. Residues 20–243 (GQGDGGDLYS…FHLQRKMGYF (224 aa)) lie on the Extracellular side of the membrane. N31 carries N-linked (GlcNAc...) asparagine glycosylation. 4-aminobutanoate is bound at residue R84. N-linked (GlcNAc...) asparagine glycosylation is found at N128 and N141. T147 contacts 4-aminobutanoate. Residues C156 and C170 are joined by a disulfide bond. The helical transmembrane segment at 244-264 (MIQIYTPCIMTVILSQVSFWI) threads the bilayer. Residues 265–270 (NKESVP) are Cytoplasmic-facing. A helical membrane pass occupies residues 271 to 290 (ARTVFGITTVLTMTTLSISA). Residues 291–304 (RHSLPKVSYATAMD) lie on the Extracellular side of the membrane. A helical membrane pass occupies residues 305–325 (WFIAVCFAFVFSALIEFAAVN). At 326-424 (YFTNLQTQRA…GTSKIDQYSR (99 aa)) the chain is on the cytoplasmic side. The tract at residues 392-415 (NSASQCQPVSAPPPAPPAPPPVGG) is disordered. The segment covering 401 to 413 (SAPPPAPPAPPPV) has biased composition (pro residues). The chain crosses the membrane as a helical span at residues 425–445 (ILFPVAFAGFNLVYWVVYLSK). Residues 446–465 (DTMEFFEPTAMHLRNDHQSN) lie on the Extracellular side of the membrane.

The protein belongs to the ligand-gated ion channel (TC 1.A.9) family. Gamma-aminobutyric acid receptor (TC 1.A.9.5) subfamily. GABRA6 sub-subfamily. In terms of assembly, heteropentamer, formed by a combination of alpha (GABRA1-6), beta (GABRB1-3), gamma (GABRG1-3), delta (GABRD), epsilon (GABRE), rho (GABRR1-3), pi (GABRP) and theta (GABRQ) chains, each subunit exhibiting distinct physiological and pharmacological properties. In terms of tissue distribution, expressed in brain, in cerebellar granule cells.

Its subcellular location is the postsynaptic cell membrane. The protein localises to the cell membrane. It catalyses the reaction chloride(in) = chloride(out). In terms of biological role, alpha subunit of the heteropentameric ligand-gated chloride channel gated by gamma-aminobutyric acid (GABA), a major inhibitory neurotransmitter in the brain. GABA-gated chloride channels, also named GABA(A) receptors (GABAAR), consist of five subunits arranged around a central pore and contain GABA active binding site(s) located at the alpha and beta subunit interface(s). When activated by GABA, GABAARs selectively allow the flow of chloride anions across the cell membrane down their electrochemical gradient. In Gallus gallus (Chicken), this protein is Gamma-aminobutyric acid receptor subunit alpha-6 (GABRA6).